We begin with the raw amino-acid sequence, 682 residues long: Potassium-transporting ATPase ATP-binding subunit (682 aa).

The next 4 helical transmembrane spans lie at Pro-34–Ala-54, Ala-62–Ala-82, Ile-219–Leu-239, and Val-254–Ile-274. Asp-307 (4-aspartylphosphate intermediate) is an active-site residue. ATP is bound by residues Asp-344, Glu-348, Phe-377–Ser-384, and Lys-395. Residues Asp-518 and Asp-522 each coordinate Mg(2+). The next 3 helical transmembrane spans lie at Phe-588–Met-608, Ala-616–Leu-636, and Ile-656–Leu-676.

Belongs to the cation transport ATPase (P-type) (TC 3.A.3) family. Type IA subfamily. In terms of assembly, the system is composed of three essential subunits: KdpA, KdpB and KdpC.

The protein resides in the cell inner membrane. It carries out the reaction K(+)(out) + ATP + H2O = K(+)(in) + ADP + phosphate + H(+). Its function is as follows. Part of the high-affinity ATP-driven potassium transport (or Kdp) system, which catalyzes the hydrolysis of ATP coupled with the electrogenic transport of potassium into the cytoplasm. This subunit is responsible for energy coupling to the transport system and for the release of the potassium ions to the cytoplasm. The protein is Potassium-transporting ATPase ATP-binding subunit of Shigella sonnei (strain Ss046).